Consider the following 488-residue polypeptide: Gamma-aminobutyric acid receptor subunit beta-4 (488 aa).

An N-terminal signal peptide occupies residues 1–25 (MWTFQADRLSGIVSALAALCVACCA). Residues 26–244 (QSPSTGNISV…SFRIKRNIGY (219 aa)) are Extracellular-facing. Residues Asn32, Asn104, Asn173, and Asn195 are each glycosylated (N-linked (GlcNAc...) asparagine). The cysteines at positions 160 and 174 are disulfide-linked. The next 3 membrane-spanning stretches (helical) occupy residues 245-266 (FILQTYMPSILITILSWVSFWI), 271-292 (SAARVALGVTTVLTMTTINTHL), and 304-326 (AIDVYLMGCFVFVFLALLEYAFV). The Cytoplasmic segment spans residues 327-465 (NYIFFGRGPR…DLTDVSTIDK (139 aa)). Residues 466–487 (WSRIIFPITFGFFNLVYWLYYV) traverse the membrane as a helical segment.

The protein belongs to the ligand-gated ion channel (TC 1.A.9) family. Gamma-aminobutyric acid receptor (TC 1.A.9.5) subfamily. GABRB4 sub-subfamily. In terms of assembly, generally pentameric. There are five types of GABA(A) receptor chains: alpha, beta, gamma, delta, and rho.

The protein resides in the postsynaptic cell membrane. It localises to the cell membrane. Functionally, GABA, the major inhibitory neurotransmitter in the vertebrate brain, mediates neuronal inhibition by binding to the GABA/benzodiazepine receptor and opening an integral chloride channel. The chain is Gamma-aminobutyric acid receptor subunit beta-4 (GABRB4) from Gallus gallus (Chicken).